Reading from the N-terminus, the 65-residue chain is Large ribosomal subunit protein bL35 (65 aa).

The span at 1-16 (MPKMKTKKSAAKRFKV) shows a compositional bias: basic residues. The disordered stretch occupies residues 1–25 (MPKMKTKKSAAKRFKVRGSGSIKRG).

The protein belongs to the bacterial ribosomal protein bL35 family.

The chain is Large ribosomal subunit protein bL35 from Bordetella parapertussis (strain 12822 / ATCC BAA-587 / NCTC 13253).